A 289-amino-acid polypeptide reads, in one-letter code: Golgi to ER traffic protein 2 (289 aa).

Positions 1-10 (MSEVSEAEKR) are enriched in basic and acidic residues. Residues 1-68 (MSEVSEAEKR…LQRGSNSGQS (68 aa)) are disordered. The Cytoplasmic segment spans residues 1-153 (MSEVSEAEKR…VGVHQFQVRQ (153 aa)). The segment covering 11–21 (RILREKRKQKF) has biased composition (basic residues). Over residues 33 to 68 (ITTQQPGGASGDSTVTSAEISDNEGSLQRGSNSGQS) the composition is skewed to polar residues. Residues 154–173 (LKAYMLLLRWAILLPFIYYV) traverse the membrane as a helical segment. The Lumenal segment spans residues 174–196 (MHPGTAHWLHTSRFLHFVMEPRN). The chain crosses the membrane as a helical span at residues 197 to 216 (FFMVFTTFEVASISIYYQVL). Residues 217 to 263 (LTLERTNKVNSLSYSSKLVTWAGLVPDGMLPIDNLQGKVVVALHYWD) lie on the Cytoplasmic side of the membrane. A helical transmembrane segment spans residues 264-284 (ILSMYLTDLSLCLVAAGLMKY). Topologically, residues 285–289 (YHAAP) are lumenal.

This sequence belongs to the GET2 family. In terms of assembly, component of the Golgi to ER traffic (GET) complex, which is composed of GET1, GET2 and GET3. Within the complex, GET1 and GET2 form a heterotetramer which is stabilized by phosphatidylinositol binding and which binds to the GET3 homodimer.

It localises to the endoplasmic reticulum membrane. The protein resides in the golgi apparatus membrane. Required for the post-translational delivery of tail-anchored (TA) proteins to the endoplasmic reticulum. Together with GET1, acts as a membrane receptor for soluble GET3, which recognizes and selectively binds the transmembrane domain of TA proteins in the cytosol. The GET complex cooperates with the HDEL receptor ERD2 to mediate the ATP-dependent retrieval of resident ER proteins that contain a C-terminal H-D-E-L retention signal from the Golgi to the ER. The sequence is that of Golgi to ER traffic protein 2 from Eremothecium gossypii (strain ATCC 10895 / CBS 109.51 / FGSC 9923 / NRRL Y-1056) (Yeast).